Here is a 659-residue protein sequence, read N- to C-terminus: A-type ATP synthase subunit I (659 aa).

8 consecutive transmembrane segments (helical) span residues Phe-376–Ala-396, Ile-415–Gly-435, Val-460–Val-480, Ala-489–Leu-509, Leu-513–Val-533, Met-542–Ala-562, Ala-566–Trp-586, and Ile-590–Phe-610.

It belongs to the V-ATPase 116 kDa subunit family. As to quaternary structure, has multiple subunits with at least A(3), B(3), C, D, E, F, H, I and proteolipid K(x).

The protein resides in the cell membrane. In terms of biological role, component of the A-type ATP synthase that produces ATP from ADP in the presence of a proton gradient across the membrane. The sequence is that of A-type ATP synthase subunit I from Pyrococcus abyssi (strain GE5 / Orsay).